The chain runs to 561 residues: BTB/POZ domain-containing protein At2g46260 (561 aa).

2 disordered regions span residues methionine 1–phenylalanine 31 and leucine 100–aspartate 119. The segment covering aspartate 17–glutamate 28 has biased composition (polar residues). Acidic residues predominate over residues aspartate 107–aspartate 119. The BTB domain occupies isoleucine 143–threonine 212. In terms of domain architecture, BACK spans glutamine 266–valine 358.

It participates in protein modification; protein ubiquitination. Functionally, may act as a substrate-specific adapter of an E3 ubiquitin-protein ligase complex (CUL3-RBX1-BTB) which mediates the ubiquitination and subsequent proteasomal degradation of target proteins. The polypeptide is BTB/POZ domain-containing protein At2g46260 (Arabidopsis thaliana (Mouse-ear cress)).